Consider the following 475-residue polypeptide: UDP-N-acetylmuramate--L-alanine ligase (475 aa).

121-127 (GTHGKTT) contributes to the ATP binding site.

It belongs to the MurCDEF family.

It localises to the cytoplasm. The enzyme catalyses UDP-N-acetyl-alpha-D-muramate + L-alanine + ATP = UDP-N-acetyl-alpha-D-muramoyl-L-alanine + ADP + phosphate + H(+). It participates in cell wall biogenesis; peptidoglycan biosynthesis. Functionally, cell wall formation. This chain is UDP-N-acetylmuramate--L-alanine ligase, found in Salinibacter ruber (strain DSM 13855 / M31).